The primary structure comprises 226 residues: Uracil-DNA glycosylase (226 aa).

Residue aspartate 64 is the Proton acceptor of the active site.

The protein belongs to the uracil-DNA glycosylase (UDG) superfamily. UNG family.

It is found in the cytoplasm. It catalyses the reaction Hydrolyzes single-stranded DNA or mismatched double-stranded DNA and polynucleotides, releasing free uracil.. In terms of biological role, excises uracil residues from the DNA which can arise as a result of misincorporation of dUMP residues by DNA polymerase or due to deamination of cytosine. The sequence is that of Uracil-DNA glycosylase from Fusobacterium nucleatum subsp. nucleatum (strain ATCC 25586 / DSM 15643 / BCRC 10681 / CIP 101130 / JCM 8532 / KCTC 2640 / LMG 13131 / VPI 4355).